The following is a 232-amino-acid chain: Large ribosomal subunit protein uL1 (232 aa).

The protein belongs to the universal ribosomal protein uL1 family. In terms of assembly, part of the 50S ribosomal subunit.

Functionally, binds directly to 23S rRNA. The L1 stalk is quite mobile in the ribosome, and is involved in E site tRNA release. Protein L1 is also a translational repressor protein, it controls the translation of the L11 operon by binding to its mRNA. The chain is Large ribosomal subunit protein uL1 from Parabacteroides distasonis (strain ATCC 8503 / DSM 20701 / CIP 104284 / JCM 5825 / NCTC 11152).